A 314-amino-acid chain; its full sequence is Olfactory receptor 5P67 (314 aa).

Residues 1–28 (MAFLEDGNHTAVTEFILLGLTDDPVLRV) are Extracellular-facing. The N-linked (GlcNAc...) asparagine glycan is linked to Asn-8. Residues 29-49 (ILFTIILCIYLVTVSGNLSTI) form a helical membrane-spanning segment. Residues 50–57 (LLIRVSSQ) lie on the Cytoplasmic side of the membrane. The helical transmembrane segment at 58 to 78 (LHHPMYFFLSHVGSVDIGYSS) threads the bilayer. At 79–102 (SVTPNMLVNFLVEKHTIAYLGCGI) the chain is on the extracellular side. Cys-100 and Cys-192 form a disulfide bridge. Residues 103-123 (QLSSAAFFGTAECFLLATMAY) traverse the membrane as a helical segment. Topologically, residues 124-136 (DRFVAICNPLLYS) are cytoplasmic. The chain crosses the membrane as a helical span at residues 137–157 (TKMSTQTCIQLVVGSYTGGIL). Residues 158–199 (NASFAIISFFSFLFCGPNRINHFYCDFAPLVELSCSDINVSV) lie on the Extracellular side of the membrane. Residues 200–220 (VITTIFSASVTIITVFVIAIS) traverse the membrane as a helical segment. The Cytoplasmic portion of the chain corresponds to 221 to 240 (YTYILITILKMRSTEGRHKA). The helical transmembrane segment at 241 to 261 (FSTCTSYLTAVTLFYGTVTFI) threads the bilayer. The Extracellular segment spans residues 262–274 (YVVPKSNYSTDQN). Asn-268 is a glycosylation site (N-linked (GlcNAc...) asparagine). Residues 275–295 (KVASVFYIVVIPMLNPLIYSL) form a helical membrane-spanning segment. Topologically, residues 296 to 314 (RNNDIKGALKRQLGKKTFS) are cytoplasmic.

The protein belongs to the G-protein coupled receptor 1 family.

The protein resides in the cell membrane. Functionally, potential odorant receptor. This is Olfactory receptor 5P67 from Mus musculus (Mouse).